We begin with the raw amino-acid sequence, 400 residues long: Argininosuccinate synthase (400 aa).

Ala-9 to Ser-17 contacts ATP. Tyr-87 is a binding site for L-citrulline. Gly-117 contributes to the ATP binding site. Residues Thr-119, Asn-123, and Asp-124 each coordinate L-aspartate. Asn-123 contacts L-citrulline. 5 residues coordinate L-citrulline: Arg-127, Ser-176, Ser-185, Glu-261, and Tyr-273.

This sequence belongs to the argininosuccinate synthase family. Type 1 subfamily. In terms of assembly, homotetramer.

Its subcellular location is the cytoplasm. The catalysed reaction is L-citrulline + L-aspartate + ATP = 2-(N(omega)-L-arginino)succinate + AMP + diphosphate + H(+). It functions in the pathway amino-acid biosynthesis; L-arginine biosynthesis; L-arginine from L-ornithine and carbamoyl phosphate: step 2/3. The polypeptide is Argininosuccinate synthase (Chlorobium limicola (strain DSM 245 / NBRC 103803 / 6330)).